A 329-amino-acid chain; its full sequence is Centromere protein L (329 aa).

Phosphoserine occurs at positions 40 and 54.

Belongs to the CENP-L/IML3 family. In terms of assembly, component of the CENPA-CAD complex, composed of CENPI, CENPK, CENPL, CENPO, CENPP, CENPQ, CENPR and CENPS. The CENPA-CAD complex interacts with the CENPA-NAC complex, at least composed of CENPA, CENPC, CENPH, CENPM, CENPN, CENPT and CENPU.

It is found in the nucleus. Its subcellular location is the chromosome. It localises to the centromere. In terms of biological role, component of the CENPA-CAD (nucleosome distal) complex, a complex recruited to centromeres which is involved in assembly of kinetochore proteins, mitotic progression and chromosome segregation. May be involved in incorporation of newly synthesized CENPA into centromeres via its interaction with the CENPA-NAC complex. The protein is Centromere protein L (Cenpl) of Mus musculus (Mouse).